The sequence spans 361 residues: MKKNLMLIFGGVSFEHEISCKSAYSVYLALLDLNKYNIYSAYIDKCTGIWYLLDSVSDPPKPIDTDVLPIVSLLPGFGIFSNNKNLEIDVVFPVVHGRTGEDGAIQGVLKVMDIPCVGAGIIGSAISSNKYFCKLLLKSFNIPIVPFIGFRQYDYSLDKEEIKRNVKEVLGYPVIVKPAVLGSSIGINVAYSENQIESCIEEALKYDLTIVIEKFIEAREIECSIIGNEKMKIFSPGEVVVQDFIFYDYDAKYSVIPGNSIIFNIPAHLETNQLLSIKEYAFLVYKNLELRGMARVDFFVEKKSGTIYLNEINTIPGFTDISMFSKMCSHDGLQFKDLIDNLIDYAFQSYINRKKRINFKD.

In terms of domain architecture, ATP-grasp spans 134–344 (KLLLKSFNIP…FKDLIDNLID (211 aa)). 167–222 (KEVLGYPVIVKPAVLGSSIGINVAYSENQIESCIEEALKYDLTIVIEKFIEAREIE) provides a ligand contact to ATP. Mg(2+) contacts are provided by D297, E311, and N313.

The protein belongs to the D-alanine--D-alanine ligase family. Mg(2+) serves as cofactor. The cofactor is Mn(2+).

The protein resides in the cytoplasm. The enzyme catalyses 2 D-alanine + ATP = D-alanyl-D-alanine + ADP + phosphate + H(+). It participates in cell wall biogenesis; peptidoglycan biosynthesis. Its function is as follows. Cell wall formation. This Borreliella afzelii (strain PKo) (Borrelia afzelii) protein is D-alanine--D-alanine ligase.